The chain runs to 533 residues: CTP synthase (533 aa).

The amidoligase domain stretch occupies residues 1–265; it reads MTKFIFVTGG…PAYLARRLGL (265 aa). A CTP-binding site is contributed by serine 13. Position 13 (serine 13) interacts with UTP. Residue 14-19 participates in ATP binding; the sequence is GLGKGI. Tyrosine 54 is an L-glutamine binding site. Residue aspartate 71 participates in ATP binding. 2 residues coordinate Mg(2+): aspartate 71 and glutamate 139. Residues 146–148, 186–191, and lysine 222 each bind CTP; these read DIE and KTKPTQ. UTP-binding positions include 186 to 191 and lysine 222; that span reads KTKPTQ. In terms of domain architecture, Glutamine amidotransferase type-1 spans 290 to 532; the sequence is EIAIVGKYVK…VEAAKKKKYG (243 aa). Residue glycine 351 coordinates L-glutamine. Cysteine 378 serves as the catalytic Nucleophile; for glutamine hydrolysis. L-glutamine-binding positions include 379 to 382, glutamate 402, and arginine 459; that span reads FGFQ. Catalysis depends on residues histidine 505 and glutamate 507.

The protein belongs to the CTP synthase family. In terms of assembly, homotetramer.

It carries out the reaction UTP + L-glutamine + ATP + H2O = CTP + L-glutamate + ADP + phosphate + 2 H(+). The enzyme catalyses L-glutamine + H2O = L-glutamate + NH4(+). The catalysed reaction is UTP + NH4(+) + ATP = CTP + ADP + phosphate + 2 H(+). It functions in the pathway pyrimidine metabolism; CTP biosynthesis via de novo pathway; CTP from UDP: step 2/2. Its activity is regulated as follows. Allosterically activated by GTP, when glutamine is the substrate; GTP has no effect on the reaction when ammonia is the substrate. The allosteric effector GTP functions by stabilizing the protein conformation that binds the tetrahedral intermediate(s) formed during glutamine hydrolysis. Inhibited by the product CTP, via allosteric rather than competitive inhibition. Catalyzes the ATP-dependent amination of UTP to CTP with either L-glutamine or ammonia as the source of nitrogen. Regulates intracellular CTP levels through interactions with the four ribonucleotide triphosphates. This chain is CTP synthase, found in Thermococcus kodakarensis (strain ATCC BAA-918 / JCM 12380 / KOD1) (Pyrococcus kodakaraensis (strain KOD1)).